A 275-amino-acid chain; its full sequence is Large ribosomal subunit protein uL2c (275 aa).

Disordered regions lie at residues 29-60 (PEKSLTYGRHRSQGRNNRGIITSRHRGGGHKR) and 225-252 (MNPVDHPHGGGEGRAPIGRSKPVTPWGH). Positions 51–60 (SRHRGGGHKR) are enriched in basic residues.

Belongs to the universal ribosomal protein uL2 family. Part of the 50S ribosomal subunit.

It is found in the plastid. The protein localises to the chloroplast. This is Large ribosomal subunit protein uL2c (rpl2) from Chlorokybus atmophyticus (Soil alga).